Consider the following 1119-residue polypeptide: MKRSLRKMWRPGEKKEPQGVVYEDVPDDTEDFKESLKVVFEGSAYGLQNFNKQKKLKRCDDMDTFFLHYAAAEGQIELMEKITRDSSLEVLHEMDDYGNTPLHCAVEKNQIESVKFLLSRGANPNLRNFNMMAPLHIAVQGMNNEVMKVLLEHRTIDVNLEGENGNTAVIIACTTNNSEALQILLKKGAKPCKSNKWGCFPIHQAAFSGSKECMEIILRFGEEHGYSRQLHINFMNNGKATPLHLAVQNGDLEMIKMCLDNGAQIDPVEKGRCTAIHFAATQGATEIVKLMISSYSGSVDIVNTTDGCHETMLHRASLFDHHELADYLISVGADINKIDSEGRSPLILATASASWNIVNLLLSKGAQVDIKDNFGRNFLHLTVQQPYGLKNLRPEFMQMQQIKELVMDEDNDGCTPLHYACRQGGPGSVNNLLGFNVSIHSKSKDKKSPLHFAASYGRINTCQRLLQDISDTRLLNEGDLHGMTPLHLAAKNGHDKVVQLLLKKGALFLSDHNGWTALHHASMGGYTQTMKVILDTNLKCTDRLDEDGNTALHFAAREGHAKAVALLLSHNADIVLNKQQASFLHLALHNKRKEVVLTIIRSKRWDECLKIFSHNSPGNKCPITEMIEYLPECMKVLLDFCMLHSTEDKSCRDYYIEYNFKYLQCPLEFTKKTPTQDVIYEPLTALNAMVQNNRIELLNHPVCKEYLLMKWLAYGFRAHMMNLGSYCLGLIPMTILVVNIKPGMAFNSTGIINETSDHSEILDTTNSYLIKTCMILVFLSSIFGYCKEAGQIFQQKRNYFMDISNVLEWIIYTTGIIFVLPLFVEIPAHLQWQCGAIAVYFYWMNFLLYLQRFENCGIFIVMLEVILKTLLRSTVVFIFLLLAFGLSFYILLNLQDPFSSPLLSIIQTFSMMLGDINYRESFLEPYLRNELAHPVLSFAQLVSFTIFVPIVLMNLLIGLAVGDIAEVQKHASLKRIAMQVELHTSLEKKLPLWFLRKVDQKSTIVYPNKPRSGGMLFHIFCFLFCTGEIRQEIPNADKSLEMEILKQKYRLKDLTFLLEKQHELIKLIIQKMEIISETEDDDSHCSFQDRFKKEQMEQRNSRWNTVLRAVKAKTHHLEP.

The Cytoplasmic portion of the chain corresponds to 1–718 (MKRSLRKMWR…MKWLAYGFRA (718 aa)). ANK repeat units follow at residues 62–92 (MDTF…EVLH), 97–126 (YGNT…NPNL), 130–160 (NMMA…DVNL), 164–193 (NGNT…KPCK), 197–226 (WGCF…EHGY), 238–267 (GKAT…QIDP), 271–301 (GRCT…SVDI), 308–337 (CHET…DINK), 341–370 (EGRS…QVDI), 374–403 (FGRN…QQIK), 412–441 (DGCT…SIHS), 445–474 (DKKS…DTRL), 481–510 (HGMT…LFLS), 513–542 (NGWT…KCTD), 547–576 (DGNT…DIVL), and 579–609 (QQAS…DECL). Cystine bridges form between cysteine 192/cysteine 665, cysteine 462/cysteine 665, cysteine 608/cysteine 621, cysteine 621/cysteine 665, and cysteine 633/cysteine 856. 4-hydroxyproline; by EGLN1; transient; in normoxia and hyperoxia is present on proline 394. (E)-cinnamaldehyde contacts are provided by cysteine 414 and cysteine 421. Position 621 (cysteine 621) interacts with (E)-cinnamaldehyde. The residue at position 633 (cysteine 633) is a Cysteine sulfenic acid (-SOH); transient; in hyperoxia. (E)-cinnamaldehyde contacts are provided by cysteine 641, cysteine 665, and lysine 710. A helical membrane pass occupies residues 719 to 739 (HMMNLGSYCLGLIPMTILVVN). Residues 740–767 (IKPGMAFNSTGIINETSDHSEILDTTNS) are Extracellular-facing. Asparagine 747 and asparagine 753 each carry an N-linked (GlcNAc...) asparagine glycan. A helical membrane pass occupies residues 768–793 (YLIKTCMILVFLSSIFGYCKEAGQIF). Residues glutamate 788 and glutamine 791 each coordinate Ca(2+). The Cytoplasmic portion of the chain corresponds to 794-798 (QQKRN). The chain crosses the membrane as a helical span at residues 799-823 (YFMDISNVLEWIIYTTGIIFVLPLF). Positions 805 and 808 each coordinate Ca(2+). At 824 to 829 (VEIPAH) the chain is on the extracellular side. The chain crosses the membrane as a helical span at residues 830–850 (LQWQCGAIAVYFYWMNFLLYL). Topologically, residues 851-862 (QRFENCGIFIVM) are cytoplasmic. Cysteine 856 bears the Cysteine sulfenic acid (-SOH); transient; in hyperoxia mark. A helical membrane pass occupies residues 863-892 (LEVILKTLLRSTVVFIFLLLAFGLSFYILL). The Extracellular segment spans residues 893 to 901 (NLQDPFSSP). The segment at residues 902–922 (LLSIIQTFSMMLGDINYRESF) is an intramembrane region (pore-forming). Residues 923–933 (LEPYLRNELAH) lie on the Extracellular side of the membrane. The helical transmembrane segment at 934-960 (PVLSFAQLVSFTIFVPIVLMNLLIGLA) threads the bilayer. Residues 961 to 1119 (VGDIAEVQKH…VKAKTHHLEP (159 aa)) lie on the Cytoplasmic side of the membrane. Residues 1042–1071 (MEILKQKYRLKDLTFLLEKQHELIKLIIQK) are a coiled coil. Position 1046 to 1052 (1046 to 1052 (KQKYRLK)) interacts with a 1,2-diacyl-sn-glycero-3-phospho-(1D-myo-inositol).

The protein belongs to the transient receptor (TC 1.A.4) family. As to quaternary structure, homotetramer. Interacts with TMEM100. Interacts with EGLN1. Interacts with the scorpion wasabi receptor toxin at the same site that electrophiles but in a non-covalent manner. In terms of processing, TRPA1 activation by electrophiles occurs though covalent modification of specific cysteine residues in the N-terminal cytoplasmic domain. Hydroxylation is required for TRPA1 activity inhibition in normoxia. In hypoxia, the decrease in oxygen concentration diminishes the activity of the hydroxylase EGLN1, thus relieving TRPA1 from inhibition and ultimately leading to channel activation. Post-translationally, oxidation of Cys-633 and Cys-856 in hyperoxia may override the hydroxylase EGLN1-mediated inhibition, causing TRPA1 activation.

The protein resides in the cell membrane. It catalyses the reaction Ca(2+)(in) = Ca(2+)(out). The catalysed reaction is Mg(2+)(in) = Mg(2+)(out). It carries out the reaction Na(+)(in) = Na(+)(out). The enzyme catalyses K(+)(in) = K(+)(out). It catalyses the reaction Zn(2+)(in) = Zn(2+)(out). With respect to regulation, electrophilic ligands activate the channel by covalent modification of intracellular cysteines; Cys-621 plays a key role in covalent binding of electrophiles. Extracellular Ca(2+) both potentiates and inactivates TRPA1; a rapid potentiation follows by slow desensitization. Activated by increase in intracellular Ca(2+) concentration. Inhibited by the potent blocker of TRPV channels ruthenium red, A-967079, AP-18, HC-030031, and aryl sulfonamide derivative (S)-N-(4-chlorobenzyl)-1-((4-fluorophenyl)sulfonyl)pyrrolidine-2-carboxamide (ASD). Activated by benzyl isothiocyanate (BITC), iodoacetamide, sulfhydryl reactive agent MTSEA, N-methyl maleimide (NMM), N-ethylmaleimide (NEM), and 2-aminoethyldiphenylborinate (2-APB). Also activated by hyperoxia. Acivated by intracellular Zn(2+). TRPA1 activation may critically depend on the presence of small intracellular compounds such as polyphosphates. Its function is as follows. Ligand-activated Ca(2+)-permeable, nonselective cation channel involved in pain detection and possibly also in cold perception, oxygen concentration perception, cough, itch, and inner ear function. Has a relatively high Ca(2+) selectivity, with a preference for divalent over monovalent cations (Ca(2+) &gt; Ba(2+) &gt; Mg(2+) &gt; NH4(+) &gt; Li(+) &gt; K(+)), the influx of cation into the cytoplasm leads to membrane depolarization. Has a central role in the pain response to endogenous inflammatory mediators, such as bradykinin and to a diverse array of irritants. Activated by a large variety of structurally unrelated electrophilic and non-electrophilic chemical compounds, such as allylthiocyanate (AITC) from mustard oil or wasabi, cinnamaldehyde, diallyl disulfide (DADS) from garlic, and acrolein, an environmental irritant. Electrophilic ligands activate TRPA1 by interacting with critical N-terminal Cys residues in a covalent manner. Non-electrophile agonists bind at distinct sites in the transmembrane domain to promote channel activation. Also acts as an ionotropic cannabinoid receptor by being activated by delta(9)-tetrahydrocannabinol (THC), the psychoactive component of marijuana. May be a component for the mechanosensitive transduction channel of hair cells in inner ear, thereby participating in the perception of sounds. The sequence is that of Transient receptor potential cation channel subfamily A member 1 from Homo sapiens (Human).